The sequence spans 213 residues: Protein PAE0745 (213 aa).

The AMMECR1 domain maps to 8 to 201 (EEGTFLVRLA…EKSPGGEVYE (194 aa)).

This is Protein PAE0745 from Pyrobaculum aerophilum (strain ATCC 51768 / DSM 7523 / JCM 9630 / CIP 104966 / NBRC 100827 / IM2).